Here is a 769-residue protein sequence, read N- to C-terminus: Serine/threonine-protein kinase PLK4 (769 aa).

Residues 14 to 267 (YEVQHLLGKG…LEAVLCHPFM (254 aa)) form the Protein kinase domain. ATP-binding positions include 20–28 (LGKGGFATV) and K43. Residue D138 is the Proton acceptor of the active site. The region spanning 381–498 (EDRISVPPLN…ARFVGLVKSK (118 aa)) is the Cryptic POLO box 1 (CPB1) domain. A Cryptic POLO box 2 (CPB2) domain is found at 499–602 (TPKVTYFSTL…GRRPITDVQP (104 aa)). A POLO box domain is found at 660–739 (PIKRINVPDI…IPNIQLKLKT (80 aa)).

Belongs to the protein kinase superfamily. Ser/Thr protein kinase family. CDC5/Polo subfamily. As to quaternary structure, homodimer. In terms of processing, ubiquitinated by the SCF(Slimb) ubiquitin ligase complex; leading to its degradation by the proteasome during interphase and regulating centriole number and ensuring the block to centriole reduplication.

The protein localises to the cytoplasm. It is found in the cytoskeleton. Its subcellular location is the microtubule organizing center. It localises to the centrosome. The protein resides in the centriole. It carries out the reaction L-seryl-[protein] + ATP = O-phospho-L-seryl-[protein] + ADP + H(+). The catalysed reaction is L-threonyl-[protein] + ATP = O-phospho-L-threonyl-[protein] + ADP + H(+). Functionally, serine/threonine-protein kinase that plays a central role in centriole duplication. Able to trigger procentriole formation on the surface of the mother centriole cylinder, using mother centriole as a platform, leading to the recruitment of centriole biogenesis proteins such as sas-6. When overexpressed, it is able to induce centrosome amplification through the simultaneous generation of multiple procentrioles adjoining each parental centriole during S phase. Centrosome amplification following overexpression can initiate tumorigenesis, highlighting the importance of centrosome regulation in cancers. The polypeptide is Serine/threonine-protein kinase PLK4 (SAK) (Drosophila simulans (Fruit fly)).